Consider the following 426-residue polypeptide: Histidine--tRNA ligase (426 aa).

This sequence belongs to the class-II aminoacyl-tRNA synthetase family. Homodimer.

Its subcellular location is the cytoplasm. It carries out the reaction tRNA(His) + L-histidine + ATP = L-histidyl-tRNA(His) + AMP + diphosphate + H(+). The polypeptide is Histidine--tRNA ligase (Picosynechococcus sp. (strain ATCC 27264 / PCC 7002 / PR-6) (Agmenellum quadruplicatum)).